The sequence spans 669 residues: Trissin receptor (669 aa).

Positions methionine 1–glutamate 15 are enriched in polar residues. Positions methionine 1–proline 90 are disordered. Topologically, residues methionine 1 to arginine 184 are extracellular. Positions asparagine 55 to glutamine 74 are enriched in low complexity. Asparagine 66 carries N-linked (GlcNAc...) asparagine glycosylation. Pro residues predominate over residues histidine 79 to leucine 89. N-linked (GlcNAc...) asparagine glycans are attached at residues asparagine 120 and asparagine 130. A helical transmembrane segment spans residues isoleucine 185 to valine 205. The Cytoplasmic portion of the chain corresponds to isoleucine 206–serine 217. Residues isoleucine 218–valine 238 traverse the membrane as a helical segment. Topologically, residues methionine 239 to threonine 269 are extracellular. A glycan (N-linked (GlcNAc...) asparagine) is linked at asparagine 241. A disulfide bridge connects residues cysteine 257 and cysteine 340. A helical membrane pass occupies residues alanine 270–isoleucine 290. At threonine 291 to arginine 302 the chain is on the cytoplasmic side. Residues methionine 303–serine 323 form a helical membrane-spanning segment. Over lysine 324 to lysine 350 the chain is Extracellular. Residues leucine 351 to leucine 371 traverse the membrane as a helical segment. Over tyrosine 372–glycine 552 the chain is Cytoplasmic. Residues valine 390–proline 401 are compositionally biased toward low complexity. Disordered stretches follow at residues valine 390–serine 481 and alanine 515–threonine 537. Residues methionine 414–histidine 429 show a composition bias toward basic residues. Residues valine 441–glycine 454 are compositionally biased toward gly residues. Residues proline 455–lysine 470 show a composition bias toward low complexity. A compositionally biased stretch (gly residues) spans serine 524 to alanine 534. A helical transmembrane segment spans residues valine 553–alanine 573. Topologically, residues arginine 574–threonine 595 are extracellular. Residues proline 596–leucine 616 form a helical membrane-spanning segment. Residues serine 617–leucine 669 are Cytoplasmic-facing. The disordered stretch occupies residues glycine 635–leucine 669. Positions glutamine 653–leucine 669 are enriched in polar residues.

It belongs to the G-protein coupled receptor 1 family.

The protein localises to the cell membrane. Functionally, G-protein coupled receptor which is activated by the Trissin peptide in vitro, leading to increased intracellular calcium ion levels. In Drosophila melanogaster (Fruit fly), this protein is Trissin receptor.